A 404-amino-acid polypeptide reads, in one-letter code: Propionate kinase (404 aa).

The protein belongs to the acetokinase family. PduW subfamily.

It is found in the cytoplasm. The enzyme catalyses propanoate + ATP = propanoyl phosphate + ADP. Its pathway is polyol metabolism; 1,2-propanediol degradation. Functionally, works with phosphate acetyltransferase (pta) to capture exogenous propionate and regenerate propionyl-CoA during degradation of 1,2-propanediol (1,2-PD). The polypeptide is Propionate kinase (Klebsiella pneumoniae subsp. pneumoniae (strain ATCC 700721 / MGH 78578)).